A 291-amino-acid chain; its full sequence is Acetylglutamate kinase (291 aa).

Substrate is bound by residues 64-65 (GG), Arg-86, and Asn-190.

The protein belongs to the acetylglutamate kinase family. ArgB subfamily.

The protein resides in the cytoplasm. The catalysed reaction is N-acetyl-L-glutamate + ATP = N-acetyl-L-glutamyl 5-phosphate + ADP. It participates in amino-acid biosynthesis; L-arginine biosynthesis; N(2)-acetyl-L-ornithine from L-glutamate: step 2/4. Functionally, catalyzes the ATP-dependent phosphorylation of N-acetyl-L-glutamate. This is Acetylglutamate kinase from Leptospira borgpetersenii serovar Hardjo-bovis (strain JB197).